Here is a 236-residue protein sequence, read N- to C-terminus: MEPGGSENAAALWISEGGRGPGRGPGPEWTSRSLLPQSGPALQPTPYSQRKGPRETHPDALKGGGGWGWGNTQSLSGECRKGVGAGEEKDGAAVSLSTPHLLAASAGLQPAPSPLGTAVCPFSPHSSPSFSHHRTLSLFISPAPLSCPAPRAQVHRSTPMGRALLTRVLLEPLRPWACPRLPRSPPGGAQSGRGGALAQPTLRCAAAPLRAWAWRSSDPPPAFSVFCHPPRGFDIS.

Residues 1 to 73 (MEPGGSENAA…GGGWGWGNTQ (73 aa)) are disordered.

This is an uncharacterized protein from Homo sapiens (Human).